Consider the following 167-residue polypeptide: Transmembrane protein B169L (167 aa).

The next 2 membrane-spanning stretches (helical) occupy residues 28 to 48 (NPFI…FAIC) and 60 to 80 (TAIY…YVLN). Residue Asn88 is glycosylated (N-linked (GlcNAc...) asparagine; by host).

The protein belongs to the asfivirus B169L family.

Its subcellular location is the host membrane. It localises to the virion. This chain is Transmembrane protein B169L, found in African swine fever virus (isolate Tick/Malawi/Lil 20-1/1983) (ASFV).